The following is a 301-amino-acid chain: uncharacterized protein (301 aa).

The next 9 helical transmembrane spans lie at 1-21, 33-53, 72-92, 101-121, 124-144, 194-214, 220-240, 253-273, and 274-294; these read MSWI…LRII, SVLF…YVYY, AMSL…KIPW, FGII…IILI, FAWL…KTFY, VLIE…IFAI, IIYT…FCLA, LALI…IAIP, and EYVA…ASII.

This sequence belongs to the TerC family.

The protein resides in the cell membrane. This is an uncharacterized protein from Rickettsia conorii (strain ATCC VR-613 / Malish 7).